Consider the following 95-residue polypeptide: Large ribosomal subunit protein uL23c (95 aa).

It belongs to the universal ribosomal protein uL23 family. In terms of assembly, part of the 50S ribosomal subunit.

It is found in the plastid. The protein resides in the chloroplast. Functionally, binds to 23S rRNA. In Guillardia theta (Cryptophyte), this protein is Large ribosomal subunit protein uL23c (rpl23).